A 333-amino-acid polypeptide reads, in one-letter code: Biotin synthase (333 aa).

Positions 46-275 (YYGKKVKLNM…TKEIRISGGR (230 aa)) constitute a Radical SAM core domain. Positions 64, 68, and 71 each coordinate [4Fe-4S] cluster. [2Fe-2S] cluster-binding residues include Cys-108, Cys-140, Cys-200, and Arg-270.

This sequence belongs to the radical SAM superfamily. Biotin synthase family. Homodimer. It depends on [4Fe-4S] cluster as a cofactor. [2Fe-2S] cluster is required as a cofactor.

It catalyses the reaction (4R,5S)-dethiobiotin + (sulfur carrier)-SH + 2 reduced [2Fe-2S]-[ferredoxin] + 2 S-adenosyl-L-methionine = (sulfur carrier)-H + biotin + 2 5'-deoxyadenosine + 2 L-methionine + 2 oxidized [2Fe-2S]-[ferredoxin]. The protein operates within cofactor biosynthesis; biotin biosynthesis; biotin from 7,8-diaminononanoate: step 2/2. Its function is as follows. Catalyzes the conversion of dethiobiotin (DTB) to biotin by the insertion of a sulfur atom into dethiobiotin via a radical-based mechanism. The polypeptide is Biotin synthase (Halalkalibacterium halodurans (strain ATCC BAA-125 / DSM 18197 / FERM 7344 / JCM 9153 / C-125) (Bacillus halodurans)).